The following is a 483-amino-acid chain: Prenyltransferase vrtC (483 aa).

This sequence belongs to the tryptophan dimethylallyltransferase family.

It functions in the pathway secondary metabolite biosynthesis; terpenoid biosynthesis. In terms of biological role, prenyltransferase; part of the gene cluster that mediates the biosynthesis of viridicatumtoxin, a tetracycline-like fungal meroterpenoid with a unique, fused spirobicyclic ring system. The first step of the pathway is the production of the malonamoyl-CoA starter unit for the polyketide synthase vrtA. The aldolase vrtJ may be involved in the synthesis of the malonamate substrate for malonamoyl-CoA synthetase vrtB. The polyketide synthase vrtA then may utilize the malonamoyl-CoA starter unit, followed by sequential condensation of eight malonyl-CoA units to form the polyketide backbone. The cyclization of the last ring could be mediated by the lactamase-like protein vrtG. The proposed post-PKS tailoring steps are a hydroxylation at C5 catalyzed the cytochrome P450 monooxygenase vrtE, a hydroxylation at C12a catalyzed by VrtH and/or VrtI, and an O-methylation by the O-methyltransferase vrtF. VrtC is then proposed to catalyze the transfer of a geranyl group synthesized by vrtD to the aromatic C ring of the tetracyclic polyketide intermediate of viridicatumtoxin to yield previridicatumtoxin. Finally, the cytochrome P450 monooxygenase vrtK catalyzes the spirocyclization of the geranyl moiety of previridicatumtoxin to afford viridicatumtoxin. The polypeptide is Prenyltransferase vrtC (Penicillium aethiopicum).